The following is a 342-amino-acid chain: Glutamyl endopeptidase (342 aa).

A signal peptide spans 1–29; that stretch reads MKGKFLKVSSLFVATLTTATLVSSPAANA. Residues 30 to 68 constitute a propeptide that is removed on maturation; the sequence is LSSKAMDNHPQQTQSSKQQTPKIKKGGNLKPLEQREHAN. The interval 33–63 is disordered; the sequence is KAMDNHPQQTQSSKQQTPKIKKGGNLKPLEQ. Residues 39–50 are compositionally biased toward low complexity; that stretch reads PQQTQSSKQQTP. Residues H119, D161, and S237 each act as charge relay system in the active site. Residues 283–342 are disordered; the sequence is FANDDQPNNPDNPDNPNNPDNPNNPDNPNNPDEPNNPDNPNNPDNPDNGDNNNSDNPDAA. Residues 286–342 show a composition bias toward low complexity; it reads DDQPNNPDNPDNPNNPDNPNNPDNPNNPDEPNNPDNPNNPDNPDNGDNNNSDNPDAA. Repeat copies occupy residues 289-291, 292-294, 295-297, 298-300, 301-303, 304-306, 307-309, 310-312, 316-318, 319-321, 322-324, 325-327, and 328-330. The interval 289–330 is 13 X 3 AA repeats of P-[DN]-N; sequence PNNPDNPDNPNNPDNPNNPDNPNNPDEPNNPDNPNNPDNPDN.

This sequence belongs to the peptidase S1B family. Post-translationally, proteolytically cleaved by aureolysin (aur). This cleavage leads to the activation of SspA.

It is found in the secreted. The catalysed reaction is Preferential cleavage: Glu-|-Xaa, Asp-|-Xaa.. In terms of biological role, preferentially cleaves peptide bonds on the carboxyl-terminal side of aspartate and glutamate. Along with other extracellular proteases it is involved in colonization and infection of human tissues. Required for proteolytic maturation of thiol protease SspB and inactivation of SspC, an inhibitor of SspB. It is the most important protease for degradation of fibronectin-binding protein (FnBP) and surface protein A, which are involved in adherence to host cells. May also protect bacteria against host defense mechanism by cleaving the immunoglobulin classes IgG, IgA and IgM. May be involved in the stability of secreted lipases. The chain is Glutamyl endopeptidase (sspA) from Staphylococcus aureus (strain Mu50 / ATCC 700699).